The chain runs to 263 residues: Thiamine thiazole synthase (263 aa).

NAD(+) is bound by residues Ser36, 55–56 (ER), Gly63, Val127, and 157–159 (HVD). Asp159 and His174 together coordinate Fe cation. Met228 is a binding site for NAD(+). Position 238 (Arg238) interacts with glycine.

This sequence belongs to the THI4 family. In terms of assembly, homooctamer; tetramer of dimers. Fe(2+) is required as a cofactor.

The enzyme catalyses hydrogen sulfide + glycine + NAD(+) = ADP-5-ethyl-4-methylthiazole-2-carboxylate + nicotinamide + 3 H2O + H(+). It participates in cofactor biosynthesis; thiamine diphosphate biosynthesis. Involved in the biosynthesis of the thiazole moiety of thiamine. Catalyzes the conversion of NAD and glycine to adenosine diphosphate 5-(2-hydroxyethyl)-4-methylthiazole-2-carboxylate (ADT), an adenylated thiazole intermediate, using free sulfide as a source of sulfur. This chain is Thiamine thiazole synthase, found in Solidesulfovibrio magneticus (strain ATCC 700980 / DSM 13731 / RS-1) (Desulfovibrio magneticus).